The following is a 247-amino-acid chain: C-type lectin domain family 7 member A (247 aa).

The Cytoplasmic segment spans residues 1 to 44; sequence MEYHPDLENLDEDGYTQLHFDSRSNTRIAVVSEKGSCVASPPWR. Residues 15–18 carry the ITAM-like motif; it reads YTQL. A helical; Signal-anchor for type II membrane protein transmembrane segment spans residues 45-65; it reads LIAVILGILCLVILVIAVVLG. The Extracellular portion of the chain corresponds to 66–247; that stretch reads TMAIWRPNSG…CSICEKKFSM (182 aa). A disordered region spans residues 81-105; sequence NGYFPSRNKENHSQPTQSPLEESVT. The N-linked (GlcNAc...) asparagine glycan is linked to asparagine 91. Positions 93 to 105 are enriched in polar residues; sequence SQPTQSPLEESVT. Disulfide bonds link cysteine 120-cysteine 131, cysteine 148-cysteine 241, and cysteine 220-cysteine 233. The 116-residue stretch at 127-242 folds into the C-type lectin domain; the sequence is YEKSCYLFSP…CSVPSCSICE (116 aa). Residue 146 to 153 participates in (1,3-beta-D-glucosyl)n binding; that stretch reads RQCSQLGS. Residues lysine 157, aspartate 159, and glutamate 163 each coordinate a divalent metal cation. Glutamate 195 is a (1,3-beta-D-glucosyl)n binding site. Glutamate 242 provides a ligand contact to a divalent metal cation.

As to quaternary structure, homodimer. Interacts with SYK; participates in leukocyte activation in presence of fungal pathogens. Interacts with CD37; this interaction controls CLEC7A-mediated IL-6 production. Phosphorylated on tyrosine residues in response to beta-glucan binding. Detected in dendritic cells, in paracortical and medullary regions of lymph nodes, and in spleen red pulp and white pulp.

The protein resides in the cell membrane. Functionally, lectin that functions as a pattern recognizing receptor (PRR) specific for beta-1,3-linked and beta-1,6-linked glucans, which constitute cell wall constituents from pathogenic bacteria and fungi. Necessary for the TLR2-mediated inflammatory response and activation of NF-kappa-B: upon beta-glucan binding, recruits SYK via its ITAM motif and promotes a signaling cascade that activates some CARD domain-BCL10-MALT1 (CBM) signalosomes, leading to the activation of NF-kappa-B and MAP kinase p38 (MAPK11, MAPK12, MAPK13 and/or MAPK14) pathways which stimulate expression of genes encoding pro-inflammatory cytokines and chemokines. Enhances cytokine production in macrophages and dendritic cells. Mediates production of reactive oxygen species in the cell. Mediates phagocytosis of C.albicans conidia. Binds T-cells in a way that does not involve their surface glycans and plays a role in T-cell activation. Stimulates T-cell proliferation. Induces phosphorylation of SCIMP after binding beta-glucans. This chain is C-type lectin domain family 7 member A (CLEC7A), found in Macaca mulatta (Rhesus macaque).